The primary structure comprises 416 residues: Cyclin-dependent kinase 8 (416 aa).

Residues 1–15 (MDYDFKVKLTGERER) form an interaction with CCNC region. Residues 21–287 (EYEGCKVGRG…SEQAMQDPYF (267 aa)) form the Protein kinase domain. ATP-binding positions include 27–35 (VGRGTYGHV) and K52. The Proton acceptor role is filled by D151. The tract at residues 313–416 (EEEPDDKGDK…PQYSHQTHRY (104 aa)) is disordered. Residues 325 to 343 (QQQQQGNNHTNGTGHPGNQ) are compositionally biased toward low complexity. Composition is skewed to polar residues over residues 361–378 (PTTT…QRSN) and 386–416 (PGPS…THRY).

Belongs to the protein kinase superfamily. CMGC Ser/Thr protein kinase family. CDC2/CDKX subfamily. Component of the Mediator complex. Interacts with ccnc. The cofactor is Mg(2+).

The protein resides in the nucleus. It carries out the reaction L-seryl-[protein] + ATP = O-phospho-L-seryl-[protein] + ADP + H(+). The catalysed reaction is L-threonyl-[protein] + ATP = O-phospho-L-threonyl-[protein] + ADP + H(+). It catalyses the reaction [DNA-directed RNA polymerase] + ATP = phospho-[DNA-directed RNA polymerase] + ADP + H(+). Its function is as follows. Component of the Mediator complex, a coactivator involved in regulated gene transcription of nearly all RNA polymerase II-dependent genes. Mediator functions as a bridge to convey information from gene-specific regulatory proteins to the basal RNA polymerase II transcription machinery. Mediator is recruited to promoters by direct interactions with regulatory proteins and serves as a scaffold for the assembly of a functional pre-initiation complex with RNA polymerase II and the general transcription factors. Phosphorylates the CTD (C-terminal domain) of the large subunit of RNA polymerase II (RNAp II), which may inhibit the formation of a transcription initiation complex. The sequence is that of Cyclin-dependent kinase 8 (cdk8) from Xenopus laevis (African clawed frog).